Reading from the N-terminus, the 251-residue chain is Hydroxyacylglutathione hydrolase (251 aa).

Zn(2+)-binding residues include H53, H55, D57, H58, H110, D127, and H165.

Belongs to the metallo-beta-lactamase superfamily. Glyoxalase II family. In terms of assembly, monomer. Requires Zn(2+) as cofactor.

It carries out the reaction an S-(2-hydroxyacyl)glutathione + H2O = a 2-hydroxy carboxylate + glutathione + H(+). It functions in the pathway secondary metabolite metabolism; methylglyoxal degradation; (R)-lactate from methylglyoxal: step 2/2. Thiolesterase that catalyzes the hydrolysis of S-D-lactoyl-glutathione to form glutathione and D-lactic acid. In Escherichia coli (strain ATCC 8739 / DSM 1576 / NBRC 3972 / NCIMB 8545 / WDCM 00012 / Crooks), this protein is Hydroxyacylglutathione hydrolase.